A 129-amino-acid polypeptide reads, in one-letter code: Small ribosomal subunit protein uS12 (129 aa).

The disordered stretch occupies residues 1–25; the sequence is MPTYNQLVRFGRKSKTRKTKSPALE. Positions 10–20 are enriched in basic residues; it reads FGRKSKTRKTK. Asp89 bears the 3-methylthioaspartic acid mark. Residues 109–129 form a disordered region; that stretch reads GRKQGRSRYGTPRKQVAVTKK.

Belongs to the universal ribosomal protein uS12 family. As to quaternary structure, part of the 30S ribosomal subunit. Contacts proteins S8 and S17. May interact with IF1 in the 30S initiation complex.

With S4 and S5 plays an important role in translational accuracy. Its function is as follows. Interacts with and stabilizes bases of the 16S rRNA that are involved in tRNA selection in the A site and with the mRNA backbone. Located at the interface of the 30S and 50S subunits, it traverses the body of the 30S subunit contacting proteins on the other side and probably holding the rRNA structure together. The combined cluster of proteins S8, S12 and S17 appears to hold together the shoulder and platform of the 30S subunit. The chain is Small ribosomal subunit protein uS12 from Rickettsia peacockii (strain Rustic).